A 493-amino-acid polypeptide reads, in one-letter code: Aspartate-semialdehyde dehydrogenase (Non-phosphorylating) (493 aa).

NADP(+)-binding positions include 160-161, 184-187, and 237-238; these read WN, KPAH, and GS. Glu259 serves as the catalytic Proton acceptor. Leu260 serves as a coordination point for NADP(+). The active-site Nucleophile is the Cys293. Position 390 (Glu390) interacts with NADP(+).

It belongs to the aldehyde dehydrogenase family.

It is found in the cytoplasm. The catalysed reaction is L-aspartate 4-semialdehyde + NAD(+) + H2O = L-aspartate + NADH + 2 H(+). Functionally, involved in the degradation of ectoine, which allows H.elongata to utilize ectoine as both a carbon and a nitrogen source for growth. Probably catalyzes the NAD(+)-dependent oxidation of L-aspartate-semialdehyde to L-aspartate. The protein is Aspartate-semialdehyde dehydrogenase (Non-phosphorylating) of Halomonas elongata (strain ATCC 33173 / DSM 2581 / NBRC 15536 / NCIMB 2198 / 1H9).